Here is a 643-residue protein sequence, read N- to C-terminus: Nicastrin (643 aa).

An N-terminal signal peptide occupies residues 1–20 (MRFKNVLVLLLLLVFSVINS). Topologically, residues 21 to 611 (EPSAPATISD…VFKIGNSTTE (591 aa)) are extracellular. A disulfide bond links C42 and C54. N-linked (GlcNAc...) asparagine glycosylation is found at N96 and N166. 2 cysteine pairs are disulfide-bonded: C204–C210 and C308–C318. N-linked (GlcNAc...) asparagine glycosylation is found at N333 and N385. 3 cysteine pairs are disulfide-bonded: C479-C486, C540-C551, and C546-C556. N-linked (GlcNAc...) asparagine glycosylation is present at N584. The helical transmembrane segment at 612–632 (IWFLVSGLIELLVSIGLILYV) threads the bilayer. Over 633–643 (KKFLSNRYKLL) the chain is Cytoplasmic.

It belongs to the nicastrin family. In terms of assembly, component of the gamma-secretase complex, a complex composed of a presenilin homodimer, nicastrin, aph1 and pen2.

It is found in the membrane. Its function is as follows. Essential subunit of the gamma-secretase complex, an endoprotease complex that catalyzes the intramembrane cleavage of integral membrane proteins such as Notch receptors and APP (amyloid-beta precursor protein). This chain is Nicastrin, found in Dictyostelium purpureum (Slime mold).